Reading from the N-terminus, the 338-residue chain is GTPase Obg (338 aa).

An Obg domain is found at 1–159; sequence MKFLDKAIIH…RILRLELILI (159 aa). Residues 160–333 enclose the OBG-type G domain; that stretch reads AHVGTLGLPN…IVKKIYDFLK (174 aa). GTP contacts are provided by residues 166-173, 191-195, 213-216, 283-286, and 314-316; these read GLPNSGKS, FTTLK, DIPG, NKID, and SAI. 2 residues coordinate Mg(2+): serine 173 and threonine 193.

The protein belongs to the TRAFAC class OBG-HflX-like GTPase superfamily. OBG GTPase family. In terms of assembly, monomer. It depends on Mg(2+) as a cofactor.

The protein localises to the cytoplasm. In terms of biological role, an essential GTPase which binds GTP, GDP and possibly (p)ppGpp with moderate affinity, with high nucleotide exchange rates and a fairly low GTP hydrolysis rate. Plays a role in control of the cell cycle, stress response, ribosome biogenesis and in those bacteria that undergo differentiation, in morphogenesis control. The protein is GTPase Obg of Buchnera aphidicola subsp. Baizongia pistaciae (strain Bp).